Here is a 208-residue protein sequence, read N- to C-terminus: MSRKNSDTKQLEILRYIYDTVENRGFPPTVREICAAVGLSSTSTVHGHLSRLERKGFLIKDATKPRALEITAEGKTELGIKPKEIPVVGVVTAGQPILAVEDISEYFPLPPDLESDAGELFMLKVHGNSMIKAGILNGDNVIVRKQSTANNGEIVVAMTDENEATVKRFFKEDDHYRLQPENDTMAPIILQQVSILGKVVGLYRNNIQ.

Positions 30–50 (VREICAAVGLSSTSTVHGHLS) form a DNA-binding region, H-T-H motif. Catalysis depends on for autocatalytic cleavage activity residues serine 129 and lysine 167.

Belongs to the peptidase S24 family. As to quaternary structure, homodimer.

It catalyses the reaction Hydrolysis of Ala-|-Gly bond in repressor LexA.. In terms of biological role, represses a number of genes involved in the response to DNA damage (SOS response), including recA and lexA. In the presence of single-stranded DNA, RecA interacts with LexA causing an autocatalytic cleavage which disrupts the DNA-binding part of LexA, leading to derepression of the SOS regulon and eventually DNA repair. This chain is LexA repressor, found in Lactobacillus acidophilus (strain ATCC 700396 / NCK56 / N2 / NCFM).